We begin with the raw amino-acid sequence, 156 residues long: Melatonin receptor type 1A (156 aa).

Helical transmembrane passes span 19–39 (LCYV…NLQT), 62–82 (TIAL…FCYL), and 115–135 (FVVF…GLIV).

It belongs to the G-protein coupled receptor 1 family. As to expression, at least in the brain, more precisely in the pars tuberalis and the suprachiasmatic nucleus.

The protein resides in the cell membrane. In terms of biological role, high affinity receptor for melatonin. Likely to mediate the reproductive and circadian actions of melatonin. The activity of this receptor is mediated by pertussis toxin sensitive G proteins that inhibit adenylate cyclase activity. Possibly involved in sleep induction, by melatonin activation of the potassium channel KCNMA1/BK and the dissociation of G-beta and G-gamma subunits, thereby decreasing synaptic transmission. The polypeptide is Melatonin receptor type 1A (Mtnr1a) (Rattus norvegicus (Rat)).